A 397-amino-acid chain; its full sequence is F-box protein At3g49450 (397 aa).

One can recognise an F-box domain in the interval 26–75; sequence GENSGTLPTDLMVEILSRVPAKSAARFRCVSNDWNSLLRSPYLTNLFLKR.

This is F-box protein At3g49450 from Arabidopsis thaliana (Mouse-ear cress).